The sequence spans 71 residues: Small ribosomal subunit protein bS21 (71 aa).

The segment covering 49–59 has biased composition (basic residues); the sequence is AAAAVKRHAKK. Residues 49–71 are disordered; the sequence is AAAAVKRHAKKVQREQRRSVRLY. Basic and acidic residues predominate over residues 60–71; sequence VQREQRRSVRLY.

The protein belongs to the bacterial ribosomal protein bS21 family.

The polypeptide is Small ribosomal subunit protein bS21 (Stutzerimonas stutzeri (strain A1501) (Pseudomonas stutzeri)).